Consider the following 94-residue polypeptide: DNA-directed RNA polymerase subunit omega (94 aa).

The protein belongs to the RNA polymerase subunit omega family. As to quaternary structure, the RNAP catalytic core consists of 2 alpha, 1 beta, 1 beta' and 1 omega subunit. When a sigma factor is associated with the core the holoenzyme is formed, which can initiate transcription.

The catalysed reaction is RNA(n) + a ribonucleoside 5'-triphosphate = RNA(n+1) + diphosphate. In terms of biological role, promotes RNA polymerase assembly. Latches the N- and C-terminal regions of the beta' subunit thereby facilitating its interaction with the beta and alpha subunits. The chain is DNA-directed RNA polymerase subunit omega from Photobacterium profundum (strain SS9).